Consider the following 693-residue polypeptide: Elongation factor G (693 aa).

In terms of domain architecture, tr-type G spans 8-282 (EKTRNIGIMA…AVIDYLPSPL (275 aa)). GTP contacts are provided by residues 17 to 24 (AHVDAGKT), 81 to 85 (DTPGH), and 135 to 138 (NKMD).

It belongs to the TRAFAC class translation factor GTPase superfamily. Classic translation factor GTPase family. EF-G/EF-2 subfamily.

The protein localises to the cytoplasm. Its function is as follows. Catalyzes the GTP-dependent ribosomal translocation step during translation elongation. During this step, the ribosome changes from the pre-translocational (PRE) to the post-translocational (POST) state as the newly formed A-site-bound peptidyl-tRNA and P-site-bound deacylated tRNA move to the P and E sites, respectively. Catalyzes the coordinated movement of the two tRNA molecules, the mRNA and conformational changes in the ribosome. This Streptococcus pneumoniae (strain P1031) protein is Elongation factor G.